The chain runs to 854 residues: Metastasis-associated in colon cancer protein 1 (854 aa).

S19 is modified (phosphoserine). The ZU5 domain maps to 212 to 349 (VTKACKVNHQ…LSQVMYLVVA (138 aa)). The SH3 domain occupies 549 to 619 (NFTNYGVTLK…HCKNVKVISK (71 aa)).

In terms of assembly, interacts with FASLG.

The protein localises to the cytoplasm. Its subcellular location is the nucleus. Its function is as follows. Acts as a transcription activator for MET and as a key regulator of HGF-MET signaling. This is Metastasis-associated in colon cancer protein 1 (MACC1) from Pongo abelii (Sumatran orangutan).